The sequence spans 235 residues: Small ribosomal subunit protein uS2 (235 aa).

Belongs to the universal ribosomal protein uS2 family.

This Thermoanaerobacter sp. (strain X514) protein is Small ribosomal subunit protein uS2.